The chain runs to 264 residues: Iodotyrosine deiodinase (264 aa).

FMN-binding positions include 75-79 (RRTVR) and 103-104 (SG). 4 residues coordinate 3-iodo-L-tyrosine: Ala-105, Glu-132, Tyr-136, and Lys-157. FMN-binding positions include 212–214 (TST) and Arg-254.

Belongs to the nitroreductase family. FMN serves as cofactor.

It carries out the reaction 2 iodide + L-tyrosine + 2 NADP(+) = 3,5-diiodo-L-tyrosine + 2 NADPH + H(+). It catalyses the reaction iodide + L-tyrosine + NADP(+) = 3-iodo-L-tyrosine + NADPH. The enzyme catalyses 3-iodo-L-tyrosine + iodide + NADP(+) = 3,5-diiodo-L-tyrosine + NADPH + H(+). The catalysed reaction is L-tyrosine + chloride + NADP(+) = 3-chloro-L-tyrosine + NADPH. It carries out the reaction bromide + L-tyrosine + NADP(+) = 3-bromo-L-tyrosine + NADPH. Its function is as follows. Catalyzes the dehalogenation of halotyrosines such as 3,5-diiodo-L-tyrosine. Likely to also catalyze the dehalogenation of other halotyrosines such as 3-bromo-L-tyrosine, 3-chloro-L-tyrosine and 3-iodo-L-tyrosine. This is Iodotyrosine deiodinase from Nematostella vectensis (Starlet sea anemone).